A 182-amino-acid chain; its full sequence is Isopentenyl-diphosphate Delta-isomerase (182 aa).

His25 and His32 together coordinate Mn(2+). The region spanning 30–164 is the Nudix hydrolase domain; that stretch reads LLHLAFSSWL…PWAFSPWMVM (135 aa). Residue Cys67 is part of the active site. His69 contacts Mn(2+). Glu87 serves as a coordination point for Mg(2+). Residues Glu114 and Glu116 each coordinate Mn(2+). Glu116 is an active-site residue.

It belongs to the IPP isomerase type 1 family. In terms of assembly, homodimer. The cofactor is Mg(2+). Requires Mn(2+) as cofactor.

Its subcellular location is the cytoplasm. It carries out the reaction isopentenyl diphosphate = dimethylallyl diphosphate. It participates in isoprenoid biosynthesis; dimethylallyl diphosphate biosynthesis; dimethylallyl diphosphate from isopentenyl diphosphate: step 1/1. Functionally, catalyzes the 1,3-allylic rearrangement of the homoallylic substrate isopentenyl (IPP) to its highly electrophilic allylic isomer, dimethylallyl diphosphate (DMAPP). This Shigella boydii serotype 18 (strain CDC 3083-94 / BS512) protein is Isopentenyl-diphosphate Delta-isomerase.